We begin with the raw amino-acid sequence, 523 residues long: tRNA-2-methylthio-N(6)-dimethylallyladenosine synthase (523 aa).

The disordered stretch occupies residues 1–26 (MNEKQRLEQTGQIQTASHPADRKSDL). The segment covering 8–17 (EQTGQIQTAS) has biased composition (polar residues). An MTTase N-terminal domain is found at 80-198 (RKFYIRTYGC…LPYILHEAYM (119 aa)). [4Fe-4S] cluster contacts are provided by Cys89, Cys125, Cys159, Cys235, Cys239, and Cys242. The 231-residue stretch at 221–451 (RKGNIKAWVN…NALVQEIAAK (231 aa)) folds into the Radical SAM core domain. Residues 454–517 (KQYEGQVVEV…TWTLTGELAN (64 aa)) form the TRAM domain.

The protein belongs to the methylthiotransferase family. MiaB subfamily. Monomer. Requires [4Fe-4S] cluster as cofactor.

It localises to the cytoplasm. It carries out the reaction N(6)-dimethylallyladenosine(37) in tRNA + (sulfur carrier)-SH + AH2 + 2 S-adenosyl-L-methionine = 2-methylsulfanyl-N(6)-dimethylallyladenosine(37) in tRNA + (sulfur carrier)-H + 5'-deoxyadenosine + L-methionine + A + S-adenosyl-L-homocysteine + 2 H(+). Catalyzes the methylthiolation of N6-(dimethylallyl)adenosine (i(6)A), leading to the formation of 2-methylthio-N6-(dimethylallyl)adenosine (ms(2)i(6)A) at position 37 in tRNAs that read codons beginning with uridine. The sequence is that of tRNA-2-methylthio-N(6)-dimethylallyladenosine synthase from Geobacillus thermodenitrificans (strain NG80-2).